Here is an 846-residue protein sequence, read N- to C-terminus: Aminopeptidase N (846 aa).

Residues glutamate 120 and 252–256 (GAMEN) contribute to the substrate site. Zn(2+) is bound at residue histidine 288. The active-site Proton acceptor is the glutamate 289. Residues histidine 292 and glutamate 311 each contribute to the Zn(2+) site.

Belongs to the peptidase M1 family. As to quaternary structure, monomer. It depends on Zn(2+) as a cofactor.

It localises to the cytoplasm. The catalysed reaction is Release of an N-terminal amino acid, Xaa-|-Yaa- from a peptide, amide or arylamide. Xaa is preferably Ala, but may be most amino acids including Pro (slow action). When a terminal hydrophobic residue is followed by a prolyl residue, the two may be released as an intact Xaa-Pro dipeptide.. In terms of biological role, aminopeptidase with broad substrate specificity to several peptides. It has more affinity for oligopeptides than for dipeptides. It plays an essential role in the metabolism, it may be involved in nitrogen supply or protein turnover. The polypeptide is Aminopeptidase N (pepN) (Lactococcus lactis subsp. cremoris (strain MG1363)).